The chain runs to 826 residues: Arsenite oxidase subunit AioA (826 aa).

Residues Cys-22, Cys-25, and Cys-29 each coordinate [3Fe-4S] cluster. Substrate contacts are provided by His-196, Glu-204, Arg-419, and His-423.

This sequence belongs to the prokaryotic molybdopterin-containing oxidoreductase family. Heterodimer consisting of a large and a small subunit. The cofactor is [3Fe-4S] cluster. It depends on Mo-bis(molybdopterin guanine dinucleotide) as a cofactor.

The enzyme catalyses 2 oxidized [azurin] + arsenite + H2O = 2 reduced [azurin] + arsenate + 3 H(+). Functionally, involved in the detoxification of arsenic. Oxidizes As(III)O3(3-) (arsenite) to the somewhat less toxic As(V)O4(3-) (arsenate). In Herminiimonas arsenicoxydans, this protein is Arsenite oxidase subunit AioA (aioA).